The following is a 381-amino-acid chain: MVESKKTDDYAIEMDKIDQGSKNFEAAAPPQPRSVPSSSLSGNPVLPVLAYCGSSILMTVMNKYVLSGLDFNLNFFLLCVQSIVCIIAIQTCKFCGLITYRDFSADEAKKWFPISLLLIGMIYTGSKALQFLSIPVYTIFKNLTIILIAYGEVLWFGGSVTGLTLFSFGLMVLSSIIAAWADIKHAVESSGDTSAQVSTLNAGYIWMLINCLCTSSYVLGMRKRIKLTNFKDFDTMFYNNLLSIPVLVVLTGLMEDWSSANIDRNFPQADRSSIMFAMILSGLSSVFISYTSAWCVRVTSSTTYSMVGALNKLPIALSGLIFFDAPVTFPSVSAIAVGFVSGIVYAIAKIKQNAKPKTGVLPTSNPLVSASSQSMRDSLRS.

Residues 1 to 39 (MVESKKTDDYAIEMDKIDQGSKNFEAAAPPQPRSVPSSS) are Cytoplasmic-facing. The helical transmembrane segment at 40–60 (LSGNPVLPVLAYCGSSILMTV) threads the bilayer. Residues 61 to 68 (MNKYVLSG) are Lumenal-facing. The chain crosses the membrane as a helical span at residues 69–89 (LDFNLNFFLLCVQSIVCIIAI). Residues 90–109 (QTCKFCGLITYRDFSADEAK) are Cytoplasmic-facing. The helical transmembrane segment at 110-126 (KWFPISLLLIGMIYTGS) threads the bilayer. Residues 127–133 (KALQFLS) are Lumenal-facing. A helical transmembrane segment spans residues 134-150 (IPVYTIFKNLTIILIAY). Residues 151–159 (GEVLWFGGS) are Cytoplasmic-facing. Residues 160–181 (VTGLTLFSFGLMVLSSIIAAWA) traverse the membrane as a helical segment. Residues 182-199 (DIKHAVESSGDTSAQVST) lie on the Lumenal side of the membrane. A helical membrane pass occupies residues 200–220 (LNAGYIWMLINCLCTSSYVLG). The Cytoplasmic portion of the chain corresponds to 221 to 232 (MRKRIKLTNFKD). Residues 233 to 253 (FDTMFYNNLLSIPVLVVLTGL) form a helical membrane-spanning segment. The Lumenal portion of the chain corresponds to 254–273 (MEDWSSANIDRNFPQADRSS). A helical membrane pass occupies residues 274 to 294 (IMFAMILSGLSSVFISYTSAW). Over 295–302 (CVRVTSST) the chain is Cytoplasmic. A helical membrane pass occupies residues 303–323 (TYSMVGALNKLPIALSGLIFF). At 324 to 326 (DAP) the chain is on the lumenal side. A helical transmembrane segment spans residues 327-347 (VTFPSVSAIAVGFVSGIVYAI). The Cytoplasmic portion of the chain corresponds to 348-381 (AKIKQNAKPKTGVLPTSNPLVSASSQSMRDSLRS).

Belongs to the TPT transporter family. SLC35D subfamily. In terms of assembly, homooligomer.

Its subcellular location is the golgi apparatus membrane. It is found in the cytoplasmic vesicle membrane. The protein resides in the endoplasmic reticulum membrane. In terms of biological role, involved in the import of GDP-mannose from the cytoplasm into the Golgi lumen. This Aspergillus oryzae (strain ATCC 42149 / RIB 40) (Yellow koji mold) protein is GDP-mannose transporter (gmt1).